The chain runs to 253 residues: Phosphate import ATP-binding protein PstB 1 (253 aa).

An ABC transporter domain is found at 7-248 (LTVSDLSLYY…PEKQETSDYI (242 aa)). 39–46 (GPSGCGKS) is a binding site for ATP.

The protein belongs to the ABC transporter superfamily. Phosphate importer (TC 3.A.1.7) family. In terms of assembly, the complex is composed of two ATP-binding proteins (PstB), two transmembrane proteins (PstC and PstA) and a solute-binding protein (PstS).

It localises to the cell membrane. It carries out the reaction phosphate(out) + ATP + H2O = ADP + 2 phosphate(in) + H(+). Its function is as follows. Part of the ABC transporter complex PstSACB involved in phosphate import. Responsible for energy coupling to the transport system. The sequence is that of Phosphate import ATP-binding protein PstB 1 from Lactococcus lactis subsp. lactis (strain IL1403) (Streptococcus lactis).